The primary structure comprises 366 residues: Agamous-like MADS-box protein AGL36 (366 aa).

Residues M1–R59 form the MADS-box domain. A coiled-coil region spans residues T86–M115.

In terms of assembly, interacts with AGL62.

It localises to the nucleus. Functionally, probable transcription factor. The polypeptide is Agamous-like MADS-box protein AGL36 (AGL36) (Arabidopsis thaliana (Mouse-ear cress)).